A 156-amino-acid chain; its full sequence is Nucleoredoxin-like protein 2 (156 aa).

The Thioredoxin domain maps to 9–147 (HLVTCKGATV…LACFQDWVEA (139 aa)).

Belongs to the nucleoredoxin family.

In terms of biological role, may be involved in the maintenance of both the function and the viability of sensory neurons, including photoreceptors and olfactory neurons. The chain is Nucleoredoxin-like protein 2 (NXNL2) from Homo sapiens (Human).